We begin with the raw amino-acid sequence, 164 residues long: Ferritin heavy chain (164 aa).

In terms of domain architecture, Ferritin-like diiron spans 1–141 (AINRQINLEL…DHVTNLRKMG (141 aa)). 5 residues coordinate Fe cation: Glu-9, Glu-44, His-47, Glu-89, and Gln-123. Phosphoserine occurs at positions 160 and 164.

Belongs to the ferritin family. In terms of assembly, oligomer of 24 subunits. There are two types of subunits: L (light) chain and H (heavy) chain. The major chain can be light or heavy, depending on the species and tissue type. The functional molecule forms a roughly spherical shell with a diameter of 12 nm and contains a central cavity into which the insoluble mineral iron core is deposited. Interacts with NCOA4; NCOA4 promotes targeting of the iron-binding ferritin complex to autolysosomes following starvation or iron depletion.

Its subcellular location is the cytoplasm. It localises to the lysosome. It is found in the cytoplasmic vesicle. The protein resides in the autophagosome. The catalysed reaction is 4 Fe(2+) + O2 + 4 H(+) = 4 Fe(3+) + 2 H2O. Functionally, stores iron in a soluble, non-toxic, readily available form. Important for iron homeostasis. Has ferroxidase activity. Iron is taken up in the ferrous form and deposited as ferric hydroxides after oxidation. Also plays a role in delivery of iron to cells. Mediates iron uptake in capsule cells of the developing kidney. Delivery to lysosomes is mediated by the cargo receptor NCOA4 for autophagic degradation and release of iron. The polypeptide is Ferritin heavy chain (FTH1) (Oryctolagus cuniculus (Rabbit)).